A 454-amino-acid chain; its full sequence is MSFVPGQENAGSRSSSGSRSGNGILKKTTWADQTERAGNNGNRGRRNQPKQTATTQPNSGSVVPHYSWFSGITQFQKGKEFQFVQGQGVPIANGIPASEQKGYWYRHNRRSFKTPDGQQKQLLPRWYFYYLGTGPHAGAEYGDDIEGVVWVASQQADTKTTADIVERDPSSHEAIPTRFAPGTVLPQGFYVEGSGRSAPASRSGSRSQSRGPNNRARSSSNQRQPASTVKPDMAEEIAALVLAKLGKDAGQPKQVTKQSAKEVRQKILNKPRQKRTPNKQCPVQQCFGKRGPNQNFGGSEMLKLGTSDPQFPILAELAPTAGAFFFGSKLELVKKNSGGADEPTKDVYELQYSGAVRFDSTLPGFETIMKVLNENLNAYQKDGGADVVSPKPQRKGRRQAQEKKDEVDNVSVAKPKSSVQRNVSRELTPEDRSLLAQILDDGVVPDGLEDDSNV.

Residues 1–62 form a disordered region; the sequence is MSFVPGQENA…ATTQPNSGSV (62 aa). Residues 11–21 are compositionally biased toward low complexity; it reads GSRSSSGSRSG. Polar residues predominate over residues 49–61; the sequence is PKQTATTQPNSGS. An RNA-binding region spans residues 56 to 197; the sequence is QPNSGSVVPH…GFYVEGSGRS (142 aa). The region spanning 64–193 is the CoV N NTD domain; that stretch reads PHYSWFSGIT…VLPQGFYVEG (130 aa). Residues Arg109, Arg125, and Arg167 each contribute to the RNA site. Disordered stretches follow at residues 159–230, 249–292, and 382–428; these read KTTA…STVK, AGQP…KRGP, and DGGA…RELT. Ser170 carries the post-translational modification Phosphoserine; by host. A Phosphothreonine; by host modification is found at Thr177. The segment covering 193–212 has biased composition (low complexity); the sequence is GSGRSAPASRSGSRSQSRGP. Residue Ser194 is modified to Phosphoserine; by host. Over residues 215 to 227 the composition is skewed to polar residues; it reads RARSSSNQRQPAS. The CoV N CTD domain occupies 260–383; that stretch reads AKEVRQKILN…ENLNAYQKDG (124 aa). The segment covering 267-277 has biased composition (basic residues); that stretch reads ILNKPRQKRTP. The dimerization stretch occupies residues 267-383; that stretch reads ILNKPRQKRT…ENLNAYQKDG (117 aa). A phosphoserine; by host mark is found at Ser389 and Ser424. Thr428 is subject to Phosphothreonine; by host.

This sequence belongs to the betacoronavirus nucleocapsid protein family. Homooligomer. Both monomeric and oligomeric forms interact with RNA. Interacts with protein M. Interacts with NSP3; this interaction serves to tether the genome to the newly translated replicase-transcriptase complex at a very early stage of infection. ADP-ribosylated. The ADP-ribosylation is retained in the virion during infection. Post-translationally, phosphorylated on serine and threonine residues.

The protein resides in the virion. The protein localises to the host endoplasmic reticulum-Golgi intermediate compartment. Its subcellular location is the host Golgi apparatus. Functionally, packages the positive strand viral genome RNA into a helical ribonucleocapsid (RNP) and plays a fundamental role during virion assembly through its interactions with the viral genome and membrane protein M. Plays an important role in enhancing the efficiency of subgenomic viral RNA transcription as well as viral replication. This chain is Nucleoprotein, found in Murine coronavirus (strain S) (MHV-S).